The primary structure comprises 610 residues: Alpha-fetoprotein (610 aa).

The N-terminal stretch at 1–18 (MKWVVSIFLIVLLNFTES) is a signal peptide. Albumin domains follow at residues 19 to 210 (RTMH…ASIT), 211 to 403 (KELR…EELE), and 404 to 602 (KYIQ…ALIS). Histidine 22 is a Cu(2+) binding site. 8 disulfides stabilise this stretch: cysteine 99/cysteine 114, cysteine 113/cysteine 124, cysteine 148/cysteine 193, cysteine 192/cysteine 201, cysteine 224/cysteine 270, cysteine 269/cysteine 277, cysteine 289/cysteine 303, and cysteine 302/cysteine 314. Phosphoserine occurs at positions 111, 115, and 117. Asparagine 251 is a glycosylation site (N-linked (GlcNAc...) asparagine). Serine 345 is subject to Phosphoserine. 7 disulfides stabilise this stretch: cysteine 385-cysteine 394, cysteine 417-cysteine 463, cysteine 462-cysteine 473, cysteine 486-cysteine 502, cysteine 501-cysteine 512, cysteine 539-cysteine 584, and cysteine 583-cysteine 592.

It belongs to the ALB/AFP/VDB family. Dimeric and trimeric forms have been found in addition to the monomeric form. In terms of tissue distribution, plasma. Synthesized by the fetal liver and yolk sac.

It is found in the secreted. Functionally, binds copper, nickel, and fatty acids as well as, and bilirubin less well than, serum albumin. This Sus scrofa (Pig) protein is Alpha-fetoprotein (AFP).